Here is a 208-residue protein sequence, read N- to C-terminus: Endo-1,4-beta-xylanase B (208 aa).

A signal peptide spans 1–16 (MKVTAAFAGLLATTLA). In terms of domain architecture, GH11 spans 17-207 (APATELVTRS…GTGTASVTVS (191 aa)). Glu101 acts as the Nucleophile in catalysis. The active-site Proton donor is Glu194.

The protein belongs to the glycosyl hydrolase 11 (cellulase G) family.

It localises to the secreted. The enzyme catalyses Endohydrolysis of (1-&gt;4)-beta-D-xylosidic linkages in xylans.. The protein operates within glycan degradation; xylan degradation. Its activity is regulated as follows. N-bromosuccinimide completely inhibits the catalytic activity. Its function is as follows. Endo-1,4-beta-xylanase involved in the hydrolysis of xylan, a major structural heterogeneous polysaccharide found in plant biomass representing the second most abundant polysaccharide in the biosphere, after cellulose. This chain is Endo-1,4-beta-xylanase B (xynB), found in Talaromyces purpureogenus (Soft rot fungus).